The chain runs to 213 residues: Ribosomal RNA small subunit methyltransferase G (213 aa).

S-adenosyl-L-methionine is bound by residues G75, F80, 128–129, and R144; that span reads IE.

Belongs to the methyltransferase superfamily. RNA methyltransferase RsmG family.

It localises to the cytoplasm. The catalysed reaction is guanosine(527) in 16S rRNA + S-adenosyl-L-methionine = N(7)-methylguanosine(527) in 16S rRNA + S-adenosyl-L-homocysteine. Functionally, specifically methylates the N7 position of guanine in position 527 of 16S rRNA. The protein is Ribosomal RNA small subunit methyltransferase G of Brucella ovis (strain ATCC 25840 / 63/290 / NCTC 10512).